A 107-amino-acid chain; its full sequence is Integration host factor (107 aa).

Positions 1-20 are disordered; it reads MALPPLTPEQRAAALEKAAA. Residues 9–18 are compositionally biased toward low complexity; the sequence is EQRAAALEKA. Residue Lys-54 coordinates DNA. The short motif at 64–71 is the H2TH motif, binds DNA element; sequence LPGVGKVR. DNA is bound by residues Ser-82, Arg-85, Arg-88, Ser-92, Asn-93, and Gln-94. The segment at 82-94 is lid, binds DNA; the sequence is SESRRVRGLGSNQ.

Belongs to the actinobacterial IHF (aIHF) family. In terms of assembly, monomer.

The protein localises to the cytoplasm. It is found in the spore. It localises to the nucleoid. In terms of biological role, a nucleoid-associated protein (NAP) that probably plays a role in chromosome compactation. Contributes to development and secondary metabolism, but is dispensable for growth and viability. Binds to the promoter region of a number of genes (including itself); multiple molecules of the protein bind to the DNA simultaneously, deletion alters the expression of about 30 genes (both up- and down-regulation occurs). Plays a role in controlling viability. Binds dsDNA without any obvious sequence specificity, in a concentration and length-dependent manner. Promotes supercoiling in a topoisomerase-dependent manner (counteracts TopA plasmid relaxation). Binds DNA as a monomer, contacting 8 base pairs via the phosphate backbone; each monomer can bind 2 DNA duplexes, allowing a bridging function. Alters DNA topology, constraining negative supercoils, possibly by DNA twist. Longer dsDNA binds more than one sIHF subunit. In Streptomyces coelicolor (strain ATCC BAA-471 / A3(2) / M145), this protein is Integration host factor.